Reading from the N-terminus, the 359-residue chain is MGSRTPLYEAHVKAGAKMVDFHGWDMPLNYGSQIEEHHAVRRDCGVFDVSHMTIVDVEGSQAQAFLRYLLANDVAKLKTEGKAQYTSMLNENGGVIDDLIVYFFSENAYRMVVNSATRDRDLAWIEKVAADFDVTTKERDDMGMLALQGPKAADKIQGVLTAEQYAEIDGMKPFVGKDVGDYFIATTGYTGEKGYEIVVPAEQLEALWNDLLKADVAPCGLGARDTLRLEAGMNLYGQDMDENITPLEANMGWSVAFEPADRDFIGRKALEQKKAEGHDKLVGLVMEEKGVLRHGQKVTVEGGEGIITSGTFSPTLGFSVAMARVPSSVGDTAEVEMRKKQMPVKVVKPGFVRNGQSVL.

It belongs to the GcvT family. The glycine cleavage system is composed of four proteins: P, T, L and H.

The catalysed reaction is N(6)-[(R)-S(8)-aminomethyldihydrolipoyl]-L-lysyl-[protein] + (6S)-5,6,7,8-tetrahydrofolate = N(6)-[(R)-dihydrolipoyl]-L-lysyl-[protein] + (6R)-5,10-methylene-5,6,7,8-tetrahydrofolate + NH4(+). In terms of biological role, the glycine cleavage system catalyzes the degradation of glycine. This Idiomarina loihiensis (strain ATCC BAA-735 / DSM 15497 / L2-TR) protein is Aminomethyltransferase.